Consider the following 101-residue polypeptide: UPF0125 protein VC_0850 (101 aa).

It belongs to the UPF0125 (RnfH) family.

The protein is UPF0125 protein VC_0850 of Vibrio cholerae serotype O1 (strain ATCC 39315 / El Tor Inaba N16961).